The chain runs to 326 residues: Malate dehydrogenase (326 aa).

12–18 (GGTGQIA) lines the NAD(+) pocket. Arg93 and Arg99 together coordinate substrate. NAD(+) contacts are provided by residues Asn106, Gln113, and 130–132 (VGN). The substrate site is built by Asn132 and Arg163. The active-site Proton acceptor is His188.

The protein belongs to the LDH/MDH superfamily. MDH type 2 family.

It carries out the reaction (S)-malate + NAD(+) = oxaloacetate + NADH + H(+). Catalyzes the reversible oxidation of malate to oxaloacetate. This chain is Malate dehydrogenase, found in Chlamydia muridarum (strain MoPn / Nigg).